The following is a 232-amino-acid chain: Large ribosomal subunit protein uL1 (232 aa).

It belongs to the universal ribosomal protein uL1 family. Part of the 50S ribosomal subunit.

Its function is as follows. Binds directly to 23S rRNA. The L1 stalk is quite mobile in the ribosome, and is involved in E site tRNA release. Functionally, protein L1 is also a translational repressor protein, it controls the translation of the L11 operon by binding to its mRNA. This Chlamydia abortus (strain DSM 27085 / S26/3) (Chlamydophila abortus) protein is Large ribosomal subunit protein uL1.